A 290-amino-acid polypeptide reads, in one-letter code: UPF0761 membrane protein YihY (290 aa).

A run of 6 helical transmembrane segments spans residues 44 to 64 (LLSL…FPMF), 104 to 124 (VGAC…DSAL), 140 to 160 (FAVY…SLAI), 183 to 203 (IFPL…VPTI), 210 to 230 (AIVG…GFAL), and 244 to 264 (VLAV…IVLL).

This sequence belongs to the UPF0761 family.

It localises to the cell inner membrane. In Escherichia coli O7:K1 (strain IAI39 / ExPEC), this protein is UPF0761 membrane protein YihY.